A 267-amino-acid chain; its full sequence is 5'-nucleotidase SurE (267 aa).

Asp-9, Asp-10, Ser-40, and Asn-97 together coordinate a divalent metal cation.

It belongs to the SurE nucleotidase family. A divalent metal cation is required as a cofactor.

Its subcellular location is the cytoplasm. The enzyme catalyses a ribonucleoside 5'-phosphate + H2O = a ribonucleoside + phosphate. In terms of biological role, nucleotidase that shows phosphatase activity on nucleoside 5'-monophosphates. This chain is 5'-nucleotidase SurE, found in Helicobacter pylori (strain G27).